Consider the following 216-residue polypeptide: Orotate phosphoribosyltransferase (216 aa).

Lys-30 serves as a coordination point for 5-phospho-alpha-D-ribose 1-diphosphate. 38-39 serves as a coordination point for orotate; the sequence is FF. Residues 75 to 76, Arg-102, Lys-103, Lys-106, His-108, and 128 to 136 contribute to the 5-phospho-alpha-D-ribose 1-diphosphate site; these read YK and DDVITAGTA. Residues Thr-132 and Arg-160 each coordinate orotate.

This sequence belongs to the purine/pyrimidine phosphoribosyltransferase family. PyrE subfamily. In terms of assembly, homodimer. Requires Mg(2+) as cofactor.

It catalyses the reaction orotidine 5'-phosphate + diphosphate = orotate + 5-phospho-alpha-D-ribose 1-diphosphate. It participates in pyrimidine metabolism; UMP biosynthesis via de novo pathway; UMP from orotate: step 1/2. In terms of biological role, catalyzes the transfer of a ribosyl phosphate group from 5-phosphoribose 1-diphosphate to orotate, leading to the formation of orotidine monophosphate (OMP). In Acinetobacter baumannii (strain AB307-0294), this protein is Orotate phosphoribosyltransferase.